The primary structure comprises 193 residues: Intracellular heme transport protein HutX (193 aa).

Tyrosine 116 contacts heme.

Homodimer. Interacts with HutZ.

The protein localises to the cytoplasm. Its function is as follows. Binds heme. Heme is transferred to the heme-degrading enzyme HutZ via a specific protein-protein interaction. The polypeptide is Intracellular heme transport protein HutX (Vibrio cholerae serotype O1 (strain ATCC 39315 / El Tor Inaba N16961)).